The sequence spans 287 residues: MEGKEEDVRLGANKFSERHAIGTAAQGTDDKDYKEPPPAPLFEPGELKSWSFYRPGIAEFVATFLFLYISILTVMGVSKSTSKCATVGIQGIAWSFGGMILALVYCTAGISGHINPAVTFGLFLARKLSLTRAVFYIIMQCLGAICGRGVVKGFQQGLYMGNGGRRNVVAPGYTKGDGLGAEIVGTFILVYTVFSATDAKRRARDSHVPILAPLPIGFAVFLVHLATMGITGTGINPARSLGAAVIYNQHHAWADHWIFWVGPFIGAALAAIYHQVIIRAIPFKSRS.

The next 2 membrane-spanning stretches (helical) occupy residues 57-77 (IAEF…VMGV) and 92-114 (IAWS…SGHI). The NPA 1 motif lies at 115–117 (NPA). The next 3 helical transmembrane spans lie at 134-154 (VFYI…VKGF), 176-196 (GDGL…VFSA), and 210-230 (ILAP…TMGI). The NPA 2 signature appears at 236 to 238 (NPA). A helical membrane pass occupies residues 258–278 (IFWVGPFIGAALAAIYHQVII).

The protein belongs to the MIP/aquaporin (TC 1.A.8) family. PIP (TC 1.A.8.11) subfamily. May interact with PIP1-2 to form heteromers. Highly expressed in roots, shoots and developing tassels, and at lower levels in leaves.

The protein localises to the cell membrane. Water channel required to facilitate the transport of water across cell membrane. Active as heteromers with PIP1-2, but not as homomers. In Zea mays (Maize), this protein is Aquaporin PIP1-1 (PIP1-1).